Consider the following 141-residue polypeptide: LOB domain-containing protein 34 (141 aa).

The LOB domain maps to N16 to I119.

Belongs to the LOB domain-containing protein family.

The chain is LOB domain-containing protein 34 (LBD34) from Arabidopsis thaliana (Mouse-ear cress).